Reading from the N-terminus, the 363-residue chain is Phosphoserine aminotransferase (363 aa).

R42 provides a ligand contact to L-glutamate. Pyridoxal 5'-phosphate contacts are provided by residues 76–77 (GR), W102, T156, D175, and Q198. K199 carries the post-translational modification N6-(pyridoxal phosphate)lysine. 240-241 (NT) serves as a coordination point for pyridoxal 5'-phosphate.

It belongs to the class-V pyridoxal-phosphate-dependent aminotransferase family. SerC subfamily. In terms of assembly, homodimer. Pyridoxal 5'-phosphate is required as a cofactor.

It is found in the cytoplasm. The catalysed reaction is O-phospho-L-serine + 2-oxoglutarate = 3-phosphooxypyruvate + L-glutamate. The enzyme catalyses 4-(phosphooxy)-L-threonine + 2-oxoglutarate = (R)-3-hydroxy-2-oxo-4-phosphooxybutanoate + L-glutamate. It participates in amino-acid biosynthesis; L-serine biosynthesis; L-serine from 3-phospho-D-glycerate: step 2/3. It functions in the pathway cofactor biosynthesis; pyridoxine 5'-phosphate biosynthesis; pyridoxine 5'-phosphate from D-erythrose 4-phosphate: step 3/5. Its function is as follows. Catalyzes the reversible conversion of 3-phosphohydroxypyruvate to phosphoserine and of 3-hydroxy-2-oxo-4-phosphonooxybutanoate to phosphohydroxythreonine. The sequence is that of Phosphoserine aminotransferase from Shewanella sp. (strain MR-4).